We begin with the raw amino-acid sequence, 448 residues long: Probable glycine dehydrogenase (decarboxylating) subunit 1 (448 aa).

It belongs to the GcvP family. N-terminal subunit subfamily. In terms of assembly, the glycine cleavage system is composed of four proteins: P, T, L and H. In this organism, the P 'protein' is a heterodimer of two subunits.

The enzyme catalyses N(6)-[(R)-lipoyl]-L-lysyl-[glycine-cleavage complex H protein] + glycine + H(+) = N(6)-[(R)-S(8)-aminomethyldihydrolipoyl]-L-lysyl-[glycine-cleavage complex H protein] + CO2. The glycine cleavage system catalyzes the degradation of glycine. The P protein binds the alpha-amino group of glycine through its pyridoxal phosphate cofactor; CO(2) is released and the remaining methylamine moiety is then transferred to the lipoamide cofactor of the H protein. The polypeptide is Probable glycine dehydrogenase (decarboxylating) subunit 1 (Anoxybacillus flavithermus (strain DSM 21510 / WK1)).